The sequence spans 908 residues: Bifunctional uridylyltransferase/uridylyl-removing enzyme (908 aa).

The uridylyltransferase stretch occupies residues 1–360 (MFDTPAVFAR…LERIFRRRRR (360 aa)). The uridylyl-removing stretch occupies residues 361–718 (IKQGYKVVRG…LDPDEDRDAT (358 aa)). The HD domain maps to 477–599 (VDEHTIQTIV…VQTTKRLDLL (123 aa)). 2 consecutive ACT domains span residues 719–801 (RACF…LKSR) and 829–904 (IIEV…GAER).

It belongs to the GlnD family. Requires Mg(2+) as cofactor.

It catalyses the reaction [protein-PII]-L-tyrosine + UTP = [protein-PII]-uridylyl-L-tyrosine + diphosphate. The enzyme catalyses [protein-PII]-uridylyl-L-tyrosine + H2O = [protein-PII]-L-tyrosine + UMP + H(+). Uridylyltransferase (UTase) activity is inhibited by glutamine, while glutamine activates uridylyl-removing (UR) activity. In terms of biological role, modifies, by uridylylation and deuridylylation, the PII regulatory proteins (GlnB and homologs), in response to the nitrogen status of the cell that GlnD senses through the glutamine level. Under low glutamine levels, catalyzes the conversion of the PII proteins and UTP to PII-UMP and PPi, while under higher glutamine levels, GlnD hydrolyzes PII-UMP to PII and UMP (deuridylylation). Thus, controls uridylylation state and activity of the PII proteins, and plays an important role in the regulation of nitrogen assimilation and metabolism. In Ruegeria pomeroyi (strain ATCC 700808 / DSM 15171 / DSS-3) (Silicibacter pomeroyi), this protein is Bifunctional uridylyltransferase/uridylyl-removing enzyme.